A 198-amino-acid polypeptide reads, in one-letter code: Ion-translocating oxidoreductase complex subunit B (198 aa).

The tract at residues 1–26 (MTTIMIAVLAIALLATLFGAILGFAS) is hydrophobic. A 4Fe-4S domain is found at 32-90 (EADPIVDQIDAILPQTQCGQCGYPGCRPYAEAIANGDSINKCPPGGQATIEKLADLMGV). Residues Cys49, Cys52, Cys57, Cys73, Cys114, Cys117, Cys120, Cys124, Cys144, Cys147, Cys150, and Cys154 each coordinate [4Fe-4S] cluster. 2 consecutive 4Fe-4S ferredoxin-type domains span residues 105–134 (KVAF…GGTK) and 135–164 (ALHT…MIPL).

This sequence belongs to the 4Fe4S bacterial-type ferredoxin family. RnfB subfamily. In terms of assembly, the complex is composed of six subunits: RnfA, RnfB, RnfC, RnfD, RnfE and RnfG. The cofactor is [4Fe-4S] cluster.

The protein resides in the cell inner membrane. Functionally, part of a membrane-bound complex that couples electron transfer with translocation of ions across the membrane. In Vibrio vulnificus (strain CMCP6), this protein is Ion-translocating oxidoreductase complex subunit B.